Consider the following 432-residue polypeptide: MVQQINIIDAKDHVDEKVKIGAWLTNKRSSGKIAFLQLRDGSAFFQGVVVKSQVSEEVFELAKEVKQEASMWITGVIHEDSRSKFGYEIEVEDIVVVGESEEYPITPKEHGVDFLLDHRHLWLRSKRPWAIMNIRNEVIRGTYEFFNQEGFIKMDSPILTGSAPEGTTELFHTEYFDRDAYLSQSGQLYAEAGALAYGKVFTFGPTFRAEKSKTRRHLIEFWMIEPEMAFMHQEQSLEVQERYIAFLVQGVIDHCQYALDILGRDVETLKKYTKLPYPRISYDEAIELLKENDFDVDWGVDFGSPEETFLADHFDQPVFVLNYPKAIKPFYMKPHPTRDDVVICADLLAPEGYGEIIGGSERATDYNYLLDQIKQAGLNPDDYAWYLDLRKYGSVPHAGFGLGLERFLTWITAEDHVRETIPFPRLLNRIYP.

It belongs to the class-II aminoacyl-tRNA synthetase family. Homodimer.

Its subcellular location is the cytoplasm. The catalysed reaction is tRNA(Asn) + L-asparagine + ATP = L-asparaginyl-tRNA(Asn) + AMP + diphosphate + H(+). This Lactiplantibacillus plantarum (strain ATCC BAA-793 / NCIMB 8826 / WCFS1) (Lactobacillus plantarum) protein is Asparagine--tRNA ligase 2 (asnS2).